Here is a 656-residue protein sequence, read N- to C-terminus: Pentatricopeptide repeat-containing protein At1g62260, mitochondrial (656 aa).

PPR repeat units follow at residues 70-104 (NTVT…DVVT), 105-134 (WNTM…MPSR), 135-169 (DSFS…NAVS), 170-200 (WSAM…DSSP), 203-227 (ALVA…YGSL), 234-264 (LVYA…IPDL), 280-310 (NVVS…MKDR), 311-345 (DTIS…DAHS), 346-372 (WNMM…TPEK), 373-407 (HTVS…GEKP), 408-438 (DPHT…VVKT), 442-472 (DVPV…MKLK), 474-508 (EVIT…GIYP), 509-544 (SHIT…KIEP), and 545-575 (QMEH…MPFE). The segment at 580–655 (VWGALLDACR…ERGSSWVDSS (76 aa)) is type E motif.

This sequence belongs to the PPR family. PCMP-E subfamily.

Its subcellular location is the mitochondrion. This chain is Pentatricopeptide repeat-containing protein At1g62260, mitochondrial (PCMP-E10), found in Arabidopsis thaliana (Mouse-ear cress).